The following is a 245-amino-acid chain: 1-(5-phosphoribosyl)-5-[(5-phosphoribosylamino)methylideneamino] imidazole-4-carboxamide isomerase (245 aa).

Catalysis depends on Asp-10, which acts as the Proton acceptor. Catalysis depends on Asp-135, which acts as the Proton donor.

Belongs to the HisA/HisF family.

It localises to the cytoplasm. The catalysed reaction is 1-(5-phospho-beta-D-ribosyl)-5-[(5-phospho-beta-D-ribosylamino)methylideneamino]imidazole-4-carboxamide = 5-[(5-phospho-1-deoxy-D-ribulos-1-ylimino)methylamino]-1-(5-phospho-beta-D-ribosyl)imidazole-4-carboxamide. Its pathway is amino-acid biosynthesis; L-histidine biosynthesis; L-histidine from 5-phospho-alpha-D-ribose 1-diphosphate: step 4/9. This chain is 1-(5-phosphoribosyl)-5-[(5-phosphoribosylamino)methylideneamino] imidazole-4-carboxamide isomerase, found in Methanosarcina acetivorans (strain ATCC 35395 / DSM 2834 / JCM 12185 / C2A).